The sequence spans 440 residues: tRNA(Ile)-lysidine synthase (440 aa).

25 to 30 (SGGVDS) provides a ligand contact to ATP.

This sequence belongs to the tRNA(Ile)-lysidine synthase family.

It is found in the cytoplasm. The catalysed reaction is cytidine(34) in tRNA(Ile2) + L-lysine + ATP = lysidine(34) in tRNA(Ile2) + AMP + diphosphate + H(+). In terms of biological role, ligates lysine onto the cytidine present at position 34 of the AUA codon-specific tRNA(Ile) that contains the anticodon CAU, in an ATP-dependent manner. Cytidine is converted to lysidine, thus changing the amino acid specificity of the tRNA from methionine to isoleucine. The sequence is that of tRNA(Ile)-lysidine synthase from Vibrio cholerae serotype O1 (strain ATCC 39315 / El Tor Inaba N16961).